A 307-amino-acid chain; its full sequence is Ribulose bisphosphate carboxylase/oxygenase activase, chloroplastic (307 aa).

Residues 1-46 (MSIPDDKEAGTIDEFLQKEGVLDILQKLDHDLVGLKPVKDRVREIA) constitute a chloroplast transit peptide. 73 to 80 (GSPGTGKT) is an ATP binding site.

This sequence belongs to the CbxX/CfxQ family. In terms of assembly, forms homooligomers. Forms heterohexameric rings with the plastid-encoded Rca subunit consisting of 3 of each nuclear- and plastidial-encoded subunits that alternate in the ring.

The protein localises to the plastid. Its subcellular location is the chloroplast. In terms of biological role, required for the expression of ribulose 1,5-bisphosphate carboxylase/oxygenase (RuBisCo). ATPase involved in the activation of red-type RuBisCo, which tends to form inactive complexes with its substrate ribulose 1,5-bisphosphate (RuBP). Catalyzes the release of RuBP from inhibited RuBisCo in an ATP-dependent manner. Activation of RuBisCO involves the ATP-dependent carboxylation of the epsilon-amino group of lysine leading to a carbamate structure. The nuclear-encoded subunit plays a more critical role in activase function than the plastidial-encoded subunit. This is Ribulose bisphosphate carboxylase/oxygenase activase, chloroplastic from Cyanidioschyzon merolae (strain NIES-3377 / 10D) (Unicellular red alga).